The following is a 574-amino-acid chain: MWTFLGIATFTYFYKKFGDFITLANREVLLCVLVFLSLGLVLSYRCRHRNGGLLGRQQSGSQFALFSDILSGLPFIGFFWAKSPPESENKEQLEARRRRKGTNISETSLIGTAACTSTSSQNDPEVIIVGAGVLGSALAAVLSRDGRKVTVIERDLKEPDRIVGEFLQPGGYHVLKDLGLGDTVEGLDAQVVNGYMIHDQESKSEVQIPYPLSENNQVQSGRAFHHGRFIMSLRKAAMAEPNAKFIEGVVLQLLEEDDVVMGVQYKDKETGDIKELHAPLTVVADGLFSKFRKSLVSNKVSVSSHFVGFLMKNAPQFKANHAELILANPSPVLIYQISSSETRVLVDIRGEMPRNLREYMVEKIYPQIPDHLKEPFLEATDNSHLRSMPASFLPPSSVKKRGVLLLGDAYNMRHPLTGGGMTVAFKDIKLWRKLLKGIPDLYDDAAIFEAKKSFYWARKTSHSFVVNILAQALYELFSATDDSLHQLRKACFLYFKLGGECVAGPVGLLSVLSPNPLVLIGHFFAVAIYAVYFCFKSEPWITKPRALLSSGAVLYKACSVIFPLIYSEMKYMVH.

At 1–20 (MWTFLGIATFTYFYKKFGDF) the chain is on the cytoplasmic side. The tract at residues 1-100 (MWTFLGIATF…EQLEARRRRK (100 aa)) is interaction with MARCHF6. Residues 21-41 (ITLANREVLLCVLVFLSLGLV) lie within the membrane without spanning it. At 42–574 (LSYRCRHRNG…IYSEMKYMVH (533 aa)) the chain is on the cytoplasmic side. A required for degradation in response to high membrane cholesterol levels region spans residues 62 to 73 (QFALFSDILSGL). The interval 118–574 (TSSQNDPEVI…IYSEMKYMVH (457 aa)) is sufficient for enzyme activity. Residues 133–134 (VL), 153–154 (ER), R161, F166, R234, V250, D408, and M421 contribute to the FAD site. The interval 516-574 (PLVLIGHFFAVAIYAVYFCFKSEPWITKPRALLSSGAVLYKACSVIFPLIYSEMKYMVH) is hydrophobic; mediates interaction with membranes.

The protein belongs to the squalene monooxygenase family. As to quaternary structure, interacts (via N-terminal domain) with MARCHF6. Interacts with SMIM22; this interaction modulates lipid droplet formation. The cofactor is FAD. Ubiquitinated by MARCHF6 in response to high cholesterol levels in intracellular membranes, leading to proteasomal degradation. Detected in liver (at protein level).

The protein localises to the microsome membrane. Its subcellular location is the endoplasmic reticulum membrane. It catalyses the reaction squalene + reduced [NADPH--hemoprotein reductase] + O2 = (S)-2,3-epoxysqualene + oxidized [NADPH--hemoprotein reductase] + H2O + H(+). It participates in terpene metabolism; lanosterol biosynthesis; lanosterol from farnesyl diphosphate: step 2/3. Its activity is regulated as follows. Inhibited by NB-598 ((E)N-ethyl-N-(6,6-dimethyl-2-hepten-4-ynyl)-3-[(3,3'-bi-thiophen-5-yl)methoxy]benzene-methanamine). Contrary to fungal enzymes, the mammalian enzyme is only slightly inhibited by terbinafine. Inhibited by tellurite, tellurium dioxide, selenite, and selenium dioxide. Functionally, catalyzes the stereospecific oxidation of squalene to (S)-2,3-epoxysqualene, and is considered to be a rate-limiting enzyme in steroid biosynthesis. This is Squalene monooxygenase (SQLE) from Homo sapiens (Human).